The sequence spans 762 residues: FAST kinase domain-containing protein 5, mitochondrial (762 aa).

At Ser95 the chain carries Phosphoserine. The residue at position 506 (Lys506) is an N6-acetyllysine. One can recognise an RAP domain in the interval 695–755 (LAIQFTNKNQ…RLEKLAYLHE (61 aa)).

This sequence belongs to the FAST kinase family. In terms of assembly, found in a complex with GRSF1, DDX28, DHX30 and FASTKD2. Associates with the 12S mitochondrial rRNA (12S mt-rRNA). Expression detected in spleen, testis, colon, heart, smooth muscle, kidney, brain, lung, liver, brown and white adipose tissue.

The protein resides in the mitochondrion matrix. The protein localises to the mitochondrion nucleoid. In terms of biological role, plays an important role in the processing of non-canonical mitochondrial mRNA precursors. The sequence is that of FAST kinase domain-containing protein 5, mitochondrial (Fastkd5) from Mus musculus (Mouse).